We begin with the raw amino-acid sequence, 187 residues long: Ribosome maturation factor RimM (187 aa).

The PRC barrel domain maps to 95–178 (DEDEFFYADL…GLVEDKDESL (84 aa)).

This sequence belongs to the RimM family. Binds ribosomal protein uS19.

The protein localises to the cytoplasm. In terms of biological role, an accessory protein needed during the final step in the assembly of 30S ribosomal subunit, possibly for assembly of the head region. Essential for efficient processing of 16S rRNA. May be needed both before and after RbfA during the maturation of 16S rRNA. It has affinity for free ribosomal 30S subunits but not for 70S ribosomes. This chain is Ribosome maturation factor RimM, found in Sinorhizobium fredii (strain NBRC 101917 / NGR234).